Consider the following 152-residue polypeptide: Siroheme decarboxylase NirD subunit (152 aa).

It belongs to the Ahb/Nir family. Probably forms a complex composed of NirD, NirL, NirG and NirH. All proteins are required for the total conversion of siroheme to didecarboxysiroheme.

It catalyses the reaction siroheme + 2 H(+) = 12,18-didecarboxysiroheme + 2 CO2. The protein operates within porphyrin-containing compound metabolism. Involved in heme d1 biosynthesis. Catalyzes the decarboxylation of siroheme into didecarboxysiroheme. The sequence is that of Siroheme decarboxylase NirD subunit from Stutzerimonas stutzeri (Pseudomonas stutzeri).